The following is a 129-amino-acid chain: Small ribosomal subunit protein uS11 (129 aa).

This sequence belongs to the universal ribosomal protein uS11 family. In terms of assembly, part of the 30S ribosomal subunit. Interacts with proteins S7 and S18. Binds to IF-3.

Functionally, located on the platform of the 30S subunit, it bridges several disparate RNA helices of the 16S rRNA. Forms part of the Shine-Dalgarno cleft in the 70S ribosome. The chain is Small ribosomal subunit protein uS11 from Allorhizobium ampelinum (strain ATCC BAA-846 / DSM 112012 / S4) (Agrobacterium vitis (strain S4)).